An 863-amino-acid polypeptide reads, in one-letter code: Major vault protein (863 aa).

9 MVP repeats span residues Asp-2–Arg-60, His-61–Pro-115, Leu-116–Lys-168, Ala-169–Ser-221, Ala-222–Asp-276, Val-277–Val-327, Tyr-328–Ala-396, Ile-397–Val-471, and Val-472–Pro-534. The tract at residues Gly-349–Arg-368 is disordered. Residues Ala-677 to Ala-706 enclose the IQ domain.

In terms of assembly, the vault ribonucleoprotein particle is a huge (400 A x 670 A) cage structure of 12.9 MDa. It consists of a dimer of half-vaults, with each half-vault comprising 39 identical major vault protein (MVP) chains, PARP4 and one or more vault RNAs (vRNAs).

Its subcellular location is the cytoplasm. The protein localises to the nucleus. Its function is as follows. Required for normal vault structure. Vaults are multi-subunit structures that may act as scaffolds for proteins involved in signal transduction. Vaults may also play a role in nucleo-cytoplasmic transport. In Danio rerio (Zebrafish), this protein is Major vault protein (mvp).